Consider the following 203-residue polypeptide: SCO2-like protein RT0576 (203 aa).

The region spanning 42-203 (KDNIKIGEAF…KEIMEFLRNE (162 aa)) is the Thioredoxin domain. Residues Cys-80, Cys-84, and His-170 each contribute to the Cu cation site.

This sequence belongs to the SCO1/2 family.

This Rickettsia typhi (strain ATCC VR-144 / Wilmington) protein is SCO2-like protein RT0576.